Reading from the N-terminus, the 676-residue chain is Exostosin-like 1 (676 aa).

The Cytoplasmic portion of the chain corresponds to 1–9 (MQSWRRRKS). Residues 10–30 (LWLALSASWLLLVLLGGFSLL) form a helical; Signal-anchor for type II membrane protein membrane-spanning segment. The Lumenal portion of the chain corresponds to 31 to 676 (RLALPPRPRP…RKKYRSLEKP (646 aa)). The segment at 238–264 (TADTGSSACPWDGRCEQDPGPGQTQRQ) is disordered. N-linked (GlcNAc...) asparagine glycosylation occurs at N269. C584 and C634 are oxidised to a cystine. The interval 610–631 (RQEAAPLAPGGPGPRPKPPAPA) is disordered. Residues 618-631 (PGGPGPRPKPPAPA) are compositionally biased toward pro residues.

The protein belongs to the glycosyltransferase 47 family.

It is found in the endoplasmic reticulum membrane. The catalysed reaction is 3-O-{[(1-&gt;4)-beta-D-GlcA-(1-&gt;4)-alpha-D-GlcNAc](n)-(1-&gt;4)-beta-D-GlcA-(1-&gt;3)-beta-D-Gal-(1-&gt;3)-beta-D-Gal-(1-&gt;4)-beta-D-Xyl}-L-seryl-[protein] + UDP-N-acetyl-alpha-D-glucosamine = 3-O-{alpha-D-GlcNAc-[(1-&gt;4)-beta-D-GlcA-(1-&gt;4)-alpha-D-GlcNAc](n)-(1-&gt;4)-beta-D-GlcA-(1-&gt;3)-beta-D-Gal-(1-&gt;3)-beta-D-Gal-(1-&gt;4)-beta-D-Xyl}-L-seryl-[protein] + UDP + H(+). The protein operates within protein modification; protein glycosylation. In terms of biological role, glycosyltransferase required for the biosynthesis of heparan-sulfate (HS). Transfers N-acetyl-alpha-D-glucosamine to the nascent HS chain (GlcNAcT-II activity). Appears to lack GlcNAcT I and GlcAT-II activities. This chain is Exostosin-like 1 (EXTL1), found in Homo sapiens (Human).